The primary structure comprises 530 residues: Inactive ubiquitin carboxyl-terminal hydrolase 17-like protein 4 (530 aa).

Residues 80-375 enclose the USP domain; the sequence is AGLQNMGNTC…QAYVLFYIQK (296 aa). Residues 382–392 are compositionally biased toward basic and acidic residues; the sequence is SESVSRGREPR. 2 disordered regions span residues 382–410 and 493–530; these read SESV…ELKR and NSTD…LVCQ. The segment covering 495 to 510 has biased composition (polar residues); that stretch reads TDQESMNTGTLASLQG. Residues 511–524 show a composition bias toward basic residues; that stretch reads RTRRSKGKNKHSKR.

Belongs to the peptidase C19 family. USP17 subfamily.

The protein resides in the nucleus. The protein localises to the endoplasmic reticulum. The polypeptide is Inactive ubiquitin carboxyl-terminal hydrolase 17-like protein 4 (USP17L4) (Homo sapiens (Human)).